Reading from the N-terminus, the 214-residue chain is CASP-like protein UU5 (214 aa).

The segment at 1 to 20 is disordered; the sequence is MSTVAQDSAPGGGKIQDAME. The Cytoplasmic segment spans residues 1–57; sequence MSTVAQDSAPGGGKIQDAMEQGAPGASSAAVVPEGGHYTQTPSPAFQAVKKNINHMS. The helical transmembrane segment at 58 to 78 threads the bilayer; the sequence is AFSLGLRVAEFVLSVIAFSLM. Topologically, residues 79–99 are extracellular; it reads ASADQNGAVYSTFTSYSFVLA. The helical transmembrane segment at 100-120 threads the bilayer; it reads VNVLVVFYTIGQIIMSVLLLV. At 121-138 the chain is on the cytoplasmic side; sequence SGSTPKKIYLFITFGCDQ. Residues 139–159 traverse the membrane as a helical segment; the sequence is LSAFLLMAAGAAGASVALIIN. The Extracellular segment spans residues 160-193; sequence RGGVTDAYGNGCIDGKITSFCSHAQASVAFTFLS. Residues 194–214 form a helical membrane-spanning segment; that stretch reads FFCMVISSLLGVYSLAPYLIL.

It belongs to the Casparian strip membrane proteins (CASP) family. Homodimer and heterodimers.

Its subcellular location is the cell membrane. The chain is CASP-like protein UU5 from Physcomitrium patens (Spreading-leaved earth moss).